A 102-amino-acid polypeptide reads, in one-letter code: Large ribosomal subunit protein bL21 (102 aa).

It belongs to the bacterial ribosomal protein bL21 family. In terms of assembly, part of the 50S ribosomal subunit. Contacts protein L20.

In terms of biological role, this protein binds to 23S rRNA in the presence of protein L20. The sequence is that of Large ribosomal subunit protein bL21 from Bacillus anthracis (strain A0248).